The sequence spans 278 residues: MDVRQSIHSAHAKTLDTQGLRNEFLVEEVFVADEYTMVYSHIDRIIVGGIMPITKTVSVGGEVGKQLGVSHFLERRELGVINIGGAGTITVDGQCYEIGHRDALYVGKGAKEVVFASIDTATPAKFYYNCAPAHTTYPTKKVTPDEVSPVTLGDNLTSNRRTINKYFVPDVLETCQLSMGLTELAPGNLWNTMPCHTHERRMEVYFYFNMDDDACVFHMMGQPQETRHIVMHNEQAVISPSWSIHSGVGTKAYTFIWGMVGENQVFDDMDHVAVKDLR.

Residues histidine 196, histidine 198, glutamate 203, and histidine 245 each contribute to the Zn(2+) site.

The protein belongs to the KduI family. As to quaternary structure, homohexamer. It depends on Zn(2+) as a cofactor.

The catalysed reaction is 5-dehydro-4-deoxy-D-glucuronate = 3-deoxy-D-glycero-2,5-hexodiulosonate. The protein operates within glycan metabolism; pectin degradation; 2-dehydro-3-deoxy-D-gluconate from pectin: step 4/5. Catalyzes the isomerization of 5-dehydro-4-deoxy-D-glucuronate to 3-deoxy-D-glycero-2,5-hexodiulosonate. This is 4-deoxy-L-threo-5-hexosulose-uronate ketol-isomerase from Escherichia coli O8 (strain IAI1).